The chain runs to 302 residues: Probable alpha-L-glutamate ligase (302 aa).

The ATP-grasp domain maps to leucine 112 to glutamate 294. Residues lysine 148, aspartate 185–phenylalanine 186, aspartate 194, and arginine 218–asparagine 220 contribute to the ATP site. Residues aspartate 255, glutamate 267, and asparagine 269 each contribute to the Mg(2+) site. 3 residues coordinate Mn(2+): aspartate 255, glutamate 267, and asparagine 269.

Belongs to the RimK family. It depends on Mg(2+) as a cofactor. Mn(2+) serves as cofactor.

This is Probable alpha-L-glutamate ligase from Haemophilus influenzae (strain ATCC 51907 / DSM 11121 / KW20 / Rd).